Reading from the N-terminus, the 427-residue chain is Septin-8-B (427 aa).

The Septin-type G domain maps to 39–305 (QGFCFNILCV…ELYRRCKLEE (267 aa)). Residues 49–56 (GETGIGKS) are G1 motif. GTP contacts are provided by residues 49-56 (GETGIGKS), glycine 104, 185-193 (KADTISKSE), glycine 239, and arginine 254. A G3 motif region spans residues 101 to 104 (DTVG). The segment at 184-187 (AKAD) is G4 motif. Residues 320–407 (LQETYEAKRK…RRKVAMETLQ (88 aa)) are a coiled coil. Over residues 406–418 (LQSQSFQATSQQP) the composition is skewed to polar residues. The disordered stretch occupies residues 406-427 (LQSQSFQATSQQPLKKDKDRKN).

This sequence belongs to the TRAFAC class TrmE-Era-EngA-EngB-Septin-like GTPase superfamily. Septin GTPase family.

The protein is Septin-8-B (sept8-b) of Xenopus laevis (African clawed frog).